The primary structure comprises 613 residues: tRNA 5-methylaminomethyl-2-thiouridine biosynthesis bifunctional protein MnmC (613 aa).

A tRNA (mnm(5)s(2)U34)-methyltransferase region spans residues 1–225; that stretch reads MKKAKLIFKD…KREMIKAYLE (225 aa). Residues 252 to 613 form an FAD-dependent cmnm(5)s(2)U34 oxidoreductase region; it reads IGAGISSAVL…FLIRKLKKGL (362 aa).

This sequence in the N-terminal section; belongs to the methyltransferase superfamily. tRNA (mnm(5)s(2)U34)-methyltransferase family. The protein in the C-terminal section; belongs to the DAO family. The cofactor is FAD.

It is found in the cytoplasm. The catalysed reaction is 5-aminomethyl-2-thiouridine(34) in tRNA + S-adenosyl-L-methionine = 5-methylaminomethyl-2-thiouridine(34) in tRNA + S-adenosyl-L-homocysteine + H(+). In terms of biological role, catalyzes the last two steps in the biosynthesis of 5-methylaminomethyl-2-thiouridine (mnm(5)s(2)U) at the wobble position (U34) in tRNA. Catalyzes the FAD-dependent demodification of cmnm(5)s(2)U34 to nm(5)s(2)U34, followed by the transfer of a methyl group from S-adenosyl-L-methionine to nm(5)s(2)U34, to form mnm(5)s(2)U34. The chain is tRNA 5-methylaminomethyl-2-thiouridine biosynthesis bifunctional protein MnmC from Campylobacter jejuni (strain RM1221).